The chain runs to 312 residues: MVRRRKGRVIHGVILLDKPTGISSNDALQKVKRLYGAEKAGHTGALDPLATGMLPICLGEATKFSQFLLDSDKRYRVIAKLGERTDTSDSDGQVVQTRPVHVDYDTLLACIAKFRGETDQVPSMFSALKYQGRPLYEYARQGIEVPREARKITVYEIELHRFEGDEVEMEVHCSKGTYIRTIVDDLGEMLGCGAHVTMLRRVGVANYPYERMVTLEQLNALVEQAHRDEKAVADVLDPLLLPMDTAVEALPEVNVIPELMTLIQHGQAVQVSGAPSDGMVRITGGEQKLFLGVGEIDDNGKVAPKRLVVYGE.

Aspartate 47 serves as the catalytic Nucleophile.

It belongs to the pseudouridine synthase TruB family. Type 1 subfamily.

It carries out the reaction uridine(55) in tRNA = pseudouridine(55) in tRNA. Its function is as follows. Responsible for synthesis of pseudouridine from uracil-55 in the psi GC loop of transfer RNAs. The sequence is that of tRNA pseudouridine synthase B from Vibrio cholerae serotype O1 (strain ATCC 39541 / Classical Ogawa 395 / O395).